A 176-amino-acid polypeptide reads, in one-letter code: Peptide methionine sulfoxide reductase MsrA (176 aa).

Cysteine 10 is an active-site residue.

The protein belongs to the MsrA Met sulfoxide reductase family.

The enzyme catalyses L-methionyl-[protein] + [thioredoxin]-disulfide + H2O = L-methionyl-(S)-S-oxide-[protein] + [thioredoxin]-dithiol. It catalyses the reaction [thioredoxin]-disulfide + L-methionine + H2O = L-methionine (S)-S-oxide + [thioredoxin]-dithiol. Functionally, has an important function as a repair enzyme for proteins that have been inactivated by oxidation. Catalyzes the reversible oxidation-reduction of methionine sulfoxide in proteins to methionine. This chain is Peptide methionine sulfoxide reductase MsrA, found in Sulfolobus acidocaldarius (strain ATCC 33909 / DSM 639 / JCM 8929 / NBRC 15157 / NCIMB 11770).